Consider the following 67-residue polypeptide: Medusin-H1 (67 aa).

Residues 1 to 22 (MDFLKKSLFLVLFLGFFSLSIC) form the signal peptide. A propeptide spanning residues 23-48 (EEEKRETEEKENEQEDDREERREEKR) is cleaved from the precursor. The segment at 24–46 (EEKRETEEKENEQEDDREERREE) is disordered. The segment covering 31 to 40 (EKENEQEDDR) has biased composition (acidic residues). Leucine amide is present on L66.

Belongs to the frog skin active peptide (FSAP) family. Medusin subfamily. In terms of tissue distribution, expressed by the skin glands.

The protein resides in the secreted. In terms of biological role, antimicrobial peptide with activity against Gram-positive bacteria (S.aureus, MIC=32 mg/L) and fungi (C.albicans, MIC=128 mg/L). Shows weak hemolytic activity. The protein is Medusin-H1 of Pithecopus hypochondrialis (Orange-legged leaf frog).